The chain runs to 378 residues: Alkanesulfonate monooxygenase (378 aa).

Belongs to the SsuD family.

The catalysed reaction is an alkanesulfonate + FMNH2 + O2 = an aldehyde + FMN + sulfite + H2O + 2 H(+). Its function is as follows. Catalyzes the desulfonation of aliphatic sulfonates. The sequence is that of Alkanesulfonate monooxygenase from Bacillus velezensis (strain DSM 23117 / BGSC 10A6 / LMG 26770 / FZB42) (Bacillus amyloliquefaciens subsp. plantarum).